The chain runs to 199 residues: Recombination protein RecR (199 aa).

The segment at 58–73 adopts a C4-type zinc-finger fold; sequence CQTCHHLSAEPTCEIC. Residues 81 to 175 form the Toprim domain; it reads GQICVVADSR…RVSRIAYGLP (95 aa).

This sequence belongs to the RecR family.

May play a role in DNA repair. It seems to be involved in an RecBC-independent recombinational process of DNA repair. It may act with RecF and RecO. The chain is Recombination protein RecR from Synechococcus sp. (strain WH7803).